Consider the following 749-residue polypeptide: Transcription factor RFX3 (749 aa).

Positions 183–258 form a DNA-binding region, RFX-type winged-helix; it reads HLQWLLDNYE…YHYYGIRVKP (76 aa). A disordered region spans residues 663–699; the sequence is VSPGNLDKDEGSEVESETDEDLDDSSEPRAKREKTEL. Positions 674-687 are enriched in acidic residues; it reads SEVESETDEDLDDS. Residues 688-698 show a composition bias toward basic and acidic residues; it reads SEPRAKREKTE.

Belongs to the RFX family. In terms of assembly, heterodimer; heterodimerizes with RFX1 and RFX2, and RFX6. In terms of tissue distribution, expressed in ciliated cells of the node and in the ciliated ependymal cells of the subcommissural organ (SCO), choroid plexuses (CP) and ventricular walls during embryonic and postnatal development. Expressed in developing and mature pancreatic endocrine cells during embryogenesis and in adults (at protein level).

It is found in the nucleus. Transcription factor required for ciliogenesis and islet cell differentiation during endocrine pancreas development. Essential for the differentiation of nodal monocilia and left-right asymmetry specification during embryogenesis. Required for the biogenesis of motile cilia by governing growth and beating efficiency of motile cells. Also required for ciliated ependymal cell differentiation. Together with RFX6, participates in the differentiation of 4 of the 5 islet cell types during endocrine pancreas development, with the exception of pancreatic PP (polypeptide-producing) cells. Regulates transcription by forming a heterodimer with another RFX protein and binding to the X-box in the promoter of target genes. Regulates the expression of genes involved in ciliary assembly (DYNC2LI1, FOXJ1 and BBS4) and genes involved in ciliary motility (DNAH11, DNAH9 and DNAH5). Represses transcription of MAP1A in non-neuronal cells but not in neuronal cells. The sequence is that of Transcription factor RFX3 (Rfx3) from Mus musculus (Mouse).